The primary structure comprises 296 residues: 4-hydroxy-tetrahydrodipicolinate synthase (296 aa).

Threonine 47 provides a ligand contact to pyruvate. Residue tyrosine 136 is the Proton donor/acceptor of the active site. Residue lysine 164 is the Schiff-base intermediate with substrate of the active site. Valine 206 serves as a coordination point for pyruvate.

The protein belongs to the DapA family. In terms of assembly, homotetramer; dimer of dimers.

Its subcellular location is the cytoplasm. It catalyses the reaction L-aspartate 4-semialdehyde + pyruvate = (2S,4S)-4-hydroxy-2,3,4,5-tetrahydrodipicolinate + H2O + H(+). The protein operates within amino-acid biosynthesis; L-lysine biosynthesis via DAP pathway; (S)-tetrahydrodipicolinate from L-aspartate: step 3/4. Functionally, catalyzes the condensation of (S)-aspartate-beta-semialdehyde [(S)-ASA] and pyruvate to 4-hydroxy-tetrahydrodipicolinate (HTPA). In Thermosynechococcus vestitus (strain NIES-2133 / IAM M-273 / BP-1), this protein is 4-hydroxy-tetrahydrodipicolinate synthase.